We begin with the raw amino-acid sequence, 146 residues long: Ribonuclease H (146 aa).

Residues 1–141 form the RNase H type-1 domain; it reads MKHVDIFTDG…ADELARKGME (141 aa). Residues aspartate 9, glutamate 47, aspartate 69, and aspartate 133 each coordinate Mg(2+). A disordered region spans residues 123–146; sequence HAGHPENERADELARKGMEPFKRR. Residues 125-146 show a composition bias toward basic and acidic residues; that stretch reads GHPENERADELARKGMEPFKRR.

This sequence belongs to the RNase H family. Monomer. The cofactor is Mg(2+).

The protein localises to the cytoplasm. It carries out the reaction Endonucleolytic cleavage to 5'-phosphomonoester.. In terms of biological role, endonuclease that specifically degrades the RNA of RNA-DNA hybrids. This is Ribonuclease H from Agrobacterium fabrum (strain C58 / ATCC 33970) (Agrobacterium tumefaciens (strain C58)).